The following is a 1214-amino-acid chain: Ubiquitin carboxyl-terminal hydrolase 36 (1214 aa).

The tract at residues 124–169 is disordered; it reads AVGSNGHDNNTVNGGTVNGNRKQTVDSGQSNQNSSANPNELPKPKR. Over residues 132 to 143 the composition is skewed to low complexity; it reads NNTVNGGTVNGN. Positions 144–161 are enriched in polar residues; the sequence is RKQTVDSGQSNQNSSANP. A USP domain is found at 192–502; sequence AGMLNVGNTC…NAYIMFYELD (311 aa). The Nucleophile role is filled by C201. H461 (proton acceptor) is an active-site residue. Positions 509-523 are enriched in low complexity; that stretch reads SSTINNNSSSSSNNS. The disordered stretch occupies residues 509–532; that stretch reads SSTINNNSSSSSNNSVAPKLNGLR. S553 and S555 each carry phosphoserine. Disordered regions lie at residues 631-819, 836-964, 977-1001, 1048-1161, and 1176-1214; these read GEAA…KQKT, HRIA…ASKS, QKLL…SESV, HGDT…PNFQ, and KFQQ…QQQS. Low complexity predominate over residues 633-651; it reads AAPNANTNANANKSSCNNN. The span at 666–685 shows a compositional bias: acidic residues; the sequence is SDEDEDEDDSDDDDDDDDDD. T717 bears the Phosphothreonine mark. Phosphoserine is present on residues S727 and S729. Low complexity-rich tracts occupy residues 735-751 and 785-816; these read QQQQ…PQQL and KTNG…NSSK. Residues 856 to 868 show a composition bias toward polar residues; the sequence is EQVQTEQGTKKLN. Over residues 869-878 the composition is skewed to low complexity; sequence SASSASASKS. A Phosphoserine modification is found at S891. T894 carries the post-translational modification Phosphothreonine. Residue S897 is modified to Phosphoserine. Acidic residues predominate over residues 915–942; sequence DDDDEEDEEEDDVEADADQEDDDDEVVV. T951 is subject to Phosphothreonine. A compositionally biased stretch (polar residues) spans 983–1001; the sequence is SAKSAATTRPGNGYQSESV. Positions 1058–1076 are enriched in low complexity; that stretch reads NSSSNNSSNINSNSNSNSN. A compositionally biased stretch (basic and acidic residues) spans 1089 to 1098; that stretch reads EAREQRKRDA. Composition is skewed to low complexity over residues 1178-1188 and 1197-1214; these read QQQRALQRHLA and QQQS…QQQS.

It belongs to the peptidase C19 family. Interacts with atms/PAF1, but not with CycT.

The protein localises to the nucleus. It localises to the nucleolus. The catalysed reaction is Thiol-dependent hydrolysis of ester, thioester, amide, peptide and isopeptide bonds formed by the C-terminal Gly of ubiquitin (a 76-residue protein attached to proteins as an intracellular targeting signal).. Functionally, required for maintaining multiple types of adult stem cells, including male and female germline, epithelial follicle cell and intestinal stem cells. May function as a transcriptional repressor by continually deubiquiting histone H2B at the promoters of genes critical for cellular differentiation, thereby preventing histone H3 'Lys-4' trimethylation (H3K4). Controls selective autophagy activation by ubiquitinated proteins. The chain is Ubiquitin carboxyl-terminal hydrolase 36 (Usp36) from Drosophila virilis (Fruit fly).